The sequence spans 195 residues: MSVHIELPTELRPLMKRPLGTLYRGKGRDTVEKFVGELASPTKLISVGDVTTFHLLEAGIIPDICIVDNRTKRKPVSRDVSDRNRDKVYEEVSVDNPAGIITDELIKTLCEAFDSEKLLRIFVRGEEDLATLPVILMAPLGSVVLYGQPDEGVVFVRVTEEKKEEIRVLFEKLISKNQNTELDKIRRILDGHKDP.

GTP-binding residues include D49, V50, D68, E127, and D150.

The protein belongs to the GTP-dependent DPCK family.

The enzyme catalyses 3'-dephospho-CoA + GTP = GDP + CoA + H(+). It functions in the pathway cofactor biosynthesis; coenzyme A biosynthesis. Functionally, catalyzes the GTP-dependent phosphorylation of the 3'-hydroxyl group of dephosphocoenzyme A to form coenzyme A (CoA). This is GTP-dependent dephospho-CoA kinase from Methanosarcina acetivorans (strain ATCC 35395 / DSM 2834 / JCM 12185 / C2A).